Here is a 312-residue protein sequence, read N- to C-terminus: MTKKKISIIGAGNTGATLAFIVAQHELADVVLIDRPDNEGQVKGKALDIFESSPVYGFDAKVTGSVNYADTADSDIVVITAGSPRKPGMSRDDLVQINEKVMFDVTKEIVKYSPDCKIIVLTNPVDAMTYSVLKASGFPKERVIGQSGVLDTARYQSFIAEALNVSIKDIRGLVLGGHGDTMVPLVNSTNVNGVPLHQLLNQTQIEQIVERTRKGGAEIVALLGNGSAYYAPASAVFEMIEAILKDQHRLLPSIALLEGEYGFSDICLGVPTVLSEKGIENIVELALSDNEQAQLRISADSVEEVKQALKNQ.

NAD(+) contacts are provided by residues 10-15 (GAGNTG) and Asp-34. Substrate is bound by residues Arg-85 and Arg-91. Residues Asn-98 and 121-123 (LTN) each bind NAD(+). 2 residues coordinate substrate: Asn-123 and Arg-154. His-178 (proton acceptor) is an active-site residue.

It belongs to the LDH/MDH superfamily. MDH type 3 family.

It catalyses the reaction (S)-malate + NAD(+) = oxaloacetate + NADH + H(+). Its function is as follows. Catalyzes the reversible oxidation of malate to oxaloacetate. In Staphylococcus saprophyticus subsp. saprophyticus (strain ATCC 15305 / DSM 20229 / NCIMB 8711 / NCTC 7292 / S-41), this protein is Malate dehydrogenase.